Here is a 151-residue protein sequence, read N- to C-terminus: Aspartate carbamoyltransferase regulatory chain (151 aa).

Zn(2+)-binding residues include Cys-108, Cys-113, Cys-138, and Cys-141.

Belongs to the PyrI family. As to quaternary structure, contains catalytic and regulatory chains. The cofactor is Zn(2+).

In terms of biological role, involved in allosteric regulation of aspartate carbamoyltransferase. The protein is Aspartate carbamoyltransferase regulatory chain of Pyrobaculum neutrophilum (strain DSM 2338 / JCM 9278 / NBRC 100436 / V24Sta) (Thermoproteus neutrophilus).